Consider the following 332-residue polypeptide: Ephrin-B2a (332 aa).

The N-terminal stretch at 1-24 is a signal peptide; that stretch reads MGDSLWRYYFGVLVIACKVNLSRA. N-linked (GlcNAc...) asparagine glycosylation is found at asparagine 20 and asparagine 33. Positions 25 to 161 constitute an Ephrin RBD domain; that stretch reads LILDSIYWNT…TKSMKIIMKV (137 aa). Topologically, residues 25–225 are extracellular; that stretch reads LILDSIYWNT…VIGSEVALFA (201 aa). Disulfide bonds link cysteine 59–cysteine 98 and cysteine 86–cysteine 150. A glycan (N-linked (GlcNAc...) asparagine) is linked at asparagine 136. The segment at 162–212 is disordered; sequence GQNPSDPISPKDYPTSYPPKHPDLGGKDSKSNEVLKPDASPHGEDKGDGNK. Residues 181 to 210 are compositionally biased toward basic and acidic residues; that stretch reads KHPDLGGKDSKSNEVLKPDASPHGEDKGDG. N-linked (GlcNAc...) asparagine glycosylation is present at asparagine 211. A helical membrane pass occupies residues 226–246; the sequence is CIASASVIVIIIIIMLVFLLL. Residues 247–332 lie on the Cytoplasmic side of the membrane; the sequence is KYRRRHRKHS…QSPANIYYKV (86 aa). A disordered region spans residues 255–285; the sequence is HSPQHATTLSLSTLATPKRGGSGGNNNGSEP. Low complexity predominate over residues 260 to 270; it reads ATTLSLSTLAT. Positions 330–332 match the PDZ-binding motif; that stretch reads YKV.

The protein belongs to the ephrin family. Binds to the receptor tyrosine kinase ephb4. Post-translationally, inducible phosphorylation of tyrosine residues in the cytoplasmic domain.

The protein resides in the cell membrane. Cell surface transmembrane ligand for Eph receptors, a family of receptor tyrosine kinases which are crucial for migration, repulsion and adhesion during neuronal, vascular and epithelial development. Binds promiscuously Eph receptors residing on adjacent cells, leading to contact-dependent bidirectional signaling into neighboring cells. The signaling pathway downstream of the receptor is referred to as forward signaling while the signaling pathway downstream of the ephrin ligand is referred to as reverse signaling. Together with ephb4 may play a central role in heart morphogenesis and angiogenesis through regulation of cell adhesion and cell migration. This is Ephrin-B2a (efnb2a) from Danio rerio (Zebrafish).